A 428-amino-acid polypeptide reads, in one-letter code: Tubby-like F-box protein 5 (428 aa).

A disordered region spans residues 17–65 (IGSMSRRAADGRAGGGRGGSRHSWPVLWSEQQQPPQQQQLQRQEHQQQQ). The span at 47–65 (QQQPPQQQQLQRQEHQQQQ) shows a compositional bias: low complexity. One can recognise an F-box domain in the interval 65–117 (QGRWANLPPELLLDVIQRVEASEATWPARRQVVACAAVCRSWREVTKEVVKTL).

The protein belongs to the TUB family. Ubiquitous.

In Oryza sativa subsp. japonica (Rice), this protein is Tubby-like F-box protein 5 (TULP5).